The primary structure comprises 179 residues: Large ribosomal subunit protein uL6 (179 aa).

It belongs to the universal ribosomal protein uL6 family. As to quaternary structure, part of the 50S ribosomal subunit.

Functionally, this protein binds to the 23S rRNA, and is important in its secondary structure. It is located near the subunit interface in the base of the L7/L12 stalk, and near the tRNA binding site of the peptidyltransferase center. The protein is Large ribosomal subunit protein uL6 of Fructilactobacillus sanfranciscensis (Lactobacillus sanfranciscensis).